A 138-amino-acid polypeptide reads, in one-letter code: MALLPDKEKLLRNFLRCANWEEKYLYIIELGQRLPELRAEDRSPQNSIQGCQSQVWIVMRQNAQGIIELQGDSDAAIVKGLIAVVFILYDQMTPQDIVNFDVRPWFEKMALTQHLTPSRSQGLEAMIRAIRAKAAALS.

The active-site Cysteine persulfide intermediate is Cys-51.

Belongs to the SufE family. Homodimer. Interacts with SufS.

It is found in the cytoplasm. It functions in the pathway cofactor biosynthesis; iron-sulfur cluster biosynthesis. Functionally, participates in cysteine desulfuration mediated by SufS. Cysteine desulfuration mobilizes sulfur from L-cysteine to yield L-alanine and constitutes an essential step in sulfur metabolism for biosynthesis of a variety of sulfur-containing biomolecules. Functions as a sulfur acceptor for SufS, by mediating the direct transfer of the sulfur atom from the S-sulfanylcysteine of SufS, an intermediate product of cysteine desulfuration process. The chain is Cysteine desulfuration protein SufE from Escherichia coli O8 (strain IAI1).